We begin with the raw amino-acid sequence, 565 residues long: 2-isopropylmalate synthase (565 aa).

In terms of domain architecture, Pyruvate carboxyltransferase spans 37–312 (PRWCSVDLRD…DPMIDLSDID (276 aa)). Residues Asp-46, His-251, His-253, and Asn-287 each coordinate Mg(2+). The tract at residues 446-565 (EGGDPAASLE…SAVNRASRES (120 aa)) is regulatory domain.

The protein belongs to the alpha-IPM synthase/homocitrate synthase family. LeuA type 2 subfamily. As to quaternary structure, homodimer. It depends on Mg(2+) as a cofactor.

The protein resides in the cytoplasm. The enzyme catalyses 3-methyl-2-oxobutanoate + acetyl-CoA + H2O = (2S)-2-isopropylmalate + CoA + H(+). The protein operates within amino-acid biosynthesis; L-leucine biosynthesis; L-leucine from 3-methyl-2-oxobutanoate: step 1/4. In terms of biological role, catalyzes the condensation of the acetyl group of acetyl-CoA with 3-methyl-2-oxobutanoate (2-ketoisovalerate) to form 3-carboxy-3-hydroxy-4-methylpentanoate (2-isopropylmalate). The polypeptide is 2-isopropylmalate synthase (Parafrankia sp. (strain EAN1pec)).